Reading from the N-terminus, the 436-residue chain is Adenylosuccinate synthetase (436 aa).

GTP-binding positions include 13–19 (GDEGKGK) and 41–43 (GHT). Asp14 functions as the Proton acceptor in the catalytic mechanism. The Mg(2+) site is built by Asp14 and Gly41. Residues 14-17 (DEGK), 39-42 (NAGH), Thr131, Arg145, Gln226, Thr241, and Arg309 each bind IMP. The active-site Proton donor is His42. 305–311 (TVTGRKR) lines the substrate pocket. Residues Arg311, 337–339 (KLD), and 419–421 (STG) each bind GTP.

The protein belongs to the adenylosuccinate synthetase family. Homodimer. The cofactor is Mg(2+).

Its subcellular location is the cytoplasm. The enzyme catalyses IMP + L-aspartate + GTP = N(6)-(1,2-dicarboxyethyl)-AMP + GDP + phosphate + 2 H(+). The protein operates within purine metabolism; AMP biosynthesis via de novo pathway; AMP from IMP: step 1/2. In terms of biological role, plays an important role in the de novo pathway of purine nucleotide biosynthesis. Catalyzes the first committed step in the biosynthesis of AMP from IMP. The polypeptide is Adenylosuccinate synthetase (Aromatoleum aromaticum (strain DSM 19018 / LMG 30748 / EbN1) (Azoarcus sp. (strain EbN1))).